The sequence spans 156 residues: MNINATLFAQIIVFFGLVWFTMKFVWPPIAKALDERAAKVAEGLAAAERGKSDFEQAEKKVAELLAEGRNQVSEMVANAEKRAAKIVEEAKEQASSEAARIAAQAKADVEQELFRARESLREQVAVLAVKGAESILRSEVDASKHAKLLDTLKQEL.

Residues Leu-7–Pro-27 form a helical membrane-spanning segment.

It belongs to the ATPase B chain family. As to quaternary structure, F-type ATPases have 2 components, F(1) - the catalytic core - and F(0) - the membrane proton channel. F(1) has five subunits: alpha(3), beta(3), gamma(1), delta(1), epsilon(1). F(0) has three main subunits: a(1), b(2) and c(10-14). The alpha and beta chains form an alternating ring which encloses part of the gamma chain. F(1) is attached to F(0) by a central stalk formed by the gamma and epsilon chains, while a peripheral stalk is formed by the delta and b chains.

Its subcellular location is the cell inner membrane. Its function is as follows. F(1)F(0) ATP synthase produces ATP from ADP in the presence of a proton or sodium gradient. F-type ATPases consist of two structural domains, F(1) containing the extramembraneous catalytic core and F(0) containing the membrane proton channel, linked together by a central stalk and a peripheral stalk. During catalysis, ATP synthesis in the catalytic domain of F(1) is coupled via a rotary mechanism of the central stalk subunits to proton translocation. Component of the F(0) channel, it forms part of the peripheral stalk, linking F(1) to F(0). This Neisseria meningitidis serogroup C (strain 053442) protein is ATP synthase subunit b.